A 597-amino-acid chain; its full sequence is Fructan 1-exohydrolase (597 aa).

The first 15 residues, 1-15, serve as a signal peptide directing secretion; sequence MAQAWAFLLPVLVFG. Asp76 is a catalytic residue. Residues Asn169, Asn237, and Asn249 are each glycosylated (N-linked (GlcNAc...) asparagine). A disulfide bridge connects residues Cys447 and Cys493. Residue Asn568 is glycosylated (N-linked (GlcNAc...) asparagine).

Belongs to the glycosyl hydrolase 32 family.

The enzyme catalyses Hydrolysis of terminal, non-reducing (2-&gt;1)-linked beta-D-fructofuranose residues in fructans.. Its activity is regulated as follows. Inhibited by sucrose. In terms of biological role, hydrolyzes inulin-type beta-(2,1)-fructans. May play a role as a beta-(2,1)-trimmer during graminan biosynthesis. This chain is Fructan 1-exohydrolase, found in Triticum urartu (Red wild einkorn).